Consider the following 229-residue polypeptide: MNKNGLWNVLKKQFLPGQTKDGEKPKLTKYHYFLFVFVLGVSFMLVSQLFSSPEKTENAKTITAVSSQHSADSKEKTAEVFKASKSDKPKDSIDDYEKEYENQLKEILETIIGVDDVSVVVNVDATSLKVYEKNKSNKNTTTEETDKEGGKRSVTDQSSEEEIVMIKNGDKETPVVVQTKKPDIRGVLVVAQGVDNVQIKQTIIEAVTRVLDVPSHRVAVAPKKIKEDS.

The helical transmembrane segment at 30 to 50 threads the bilayer; that stretch reads YHYFLFVFVLGVSFMLVSQLF. Disordered regions lie at residues 64–93 and 136–159; these read AVSS…KDSI and SNKN…DQSS. The span at 71–93 shows a compositional bias: basic and acidic residues; it reads ADSKEKTAEVFKASKSDKPKDSI.

The protein resides in the cell membrane. The protein is Stage III sporulation protein AG (spoIIIAG) of Bacillus subtilis (strain 168).